Consider the following 210-residue polypeptide: Histidine biosynthesis bifunctional protein HisIE (210 aa).

The segment at 1-106 is phosphoribosyl-AMP cyclohydrolase; that stretch reads MTNYKIDFSK…SCFNTEVPFS (106 aa). Residues 107–210 form a phosphoribosyl-ATP pyrophosphohydrolase region; sequence VQTLAQTVQD…KGERQNIEQW (104 aa).

The protein in the N-terminal section; belongs to the PRA-CH family. This sequence in the C-terminal section; belongs to the PRA-PH family.

It is found in the cytoplasm. It carries out the reaction 1-(5-phospho-beta-D-ribosyl)-ATP + H2O = 1-(5-phospho-beta-D-ribosyl)-5'-AMP + diphosphate + H(+). The enzyme catalyses 1-(5-phospho-beta-D-ribosyl)-5'-AMP + H2O = 1-(5-phospho-beta-D-ribosyl)-5-[(5-phospho-beta-D-ribosylamino)methylideneamino]imidazole-4-carboxamide. It functions in the pathway amino-acid biosynthesis; L-histidine biosynthesis; L-histidine from 5-phospho-alpha-D-ribose 1-diphosphate: step 2/9. The protein operates within amino-acid biosynthesis; L-histidine biosynthesis; L-histidine from 5-phospho-alpha-D-ribose 1-diphosphate: step 3/9. In Staphylococcus aureus (strain COL), this protein is Histidine biosynthesis bifunctional protein HisIE (hisI).